Consider the following 300-residue polypeptide: U6 snRNA methylphosphate capping enzyme Amus (300 aa).

The segment covering 1–12 (MDLENNNNTPLT) has biased composition (polar residues). Disordered stretches follow at residues 1-21 (MDLE…KCAK) and 34-68 (VESK…GKPM). Positions 34-44 (VESKRLKKEES) are enriched in basic and acidic residues. The region spanning 95–300 (DIRLDVLGTQ…KRPIQIFTKS (206 aa)) is the Bin3-type SAM domain. Residues Asn-119 and Asp-140 each contribute to the S-adenosyl-L-methionine site.

The protein belongs to the methyltransferase superfamily.

It is found in the nucleus. In terms of biological role, probable S-adenosyl-L-methionine-dependent methyltransferase that binds and stabilizes U6 snRNA, probably by adding a methylphosphate cap at its 5'-end. Required for U6 stability, but not stability of 7SK snRNAs, other miRNAs or tRNAs. U6 stabilization is required for efficient pre-mRNA splicing. Essential for organismal and germline development. In Drosophila melanogaster (Fruit fly), this protein is U6 snRNA methylphosphate capping enzyme Amus.